A 255-amino-acid chain; its full sequence is tRNA (guanine-N(7)-)-methyltransferase (255 aa).

The disordered stretch occupies residues 1 to 35 (MTRTNDASGGGKLPRKRFYRARAHSNPLSDSHFPV). Positions 13 to 23 (LPRKRFYRARA) are enriched in basic residues. S-adenosyl-L-methionine-binding positions include Gly75, 98–99 (EL), 131–132 (NS), and Leu151. The active site involves Asp154. 229 to 231 (TEE) contacts S-adenosyl-L-methionine.

Belongs to the class I-like SAM-binding methyltransferase superfamily. TrmB family.

It is found in the nucleus. The catalysed reaction is guanosine(46) in tRNA + S-adenosyl-L-methionine = N(7)-methylguanosine(46) in tRNA + S-adenosyl-L-homocysteine. It functions in the pathway tRNA modification; N(7)-methylguanine-tRNA biosynthesis. Catalyzes the formation of N(7)-methylguanine at position 46 (m7G46) in tRNA. This is tRNA (guanine-N(7)-)-methyltransferase from Zea mays (Maize).